Reading from the N-terminus, the 662-residue chain is Probable quinol oxidase subunit 1 (662 aa).

Transmembrane regions (helical) follow at residues 14 to 34 (WMIT…IAVI) and 58 to 78 (IMYL…ALLI). Residue His-102 participates in Fe(II)-heme a binding. The next 8 membrane-spanning stretches (helical) occupy residues 103 to 123 (GVIM…NIVV), 140 to 160 (VSFW…IIGG), 187 to 207 (IAIQ…FVTI), 228 to 248 (FITT…LALM), 273 to 293 (FFWV…FGIY), 311 to 331 (MVWA…HHFF), 336 to 356 (GALI…PTGV), and 376 to 396 (MLFS…GVML). Residues His-279, Tyr-283, His-328, and His-329 each coordinate Cu cation. The 1'-histidyl-3'-tyrosine (His-Tyr) cross-link spans 279–283 (HPEVY). His-414 contacts heme a3. 5 helical membrane passes run 415–435 (FHYT…IFWY), 451–471 (CFWF…ILGL), 493–513 (ISTI…VSIV), 587–604 (PVGF…FFLI), and 608–627 (VIPA…YRSF). Position 416 (His-416) interacts with Fe(II)-heme a.

Belongs to the heme-copper respiratory oxidase family. It depends on Cu cation as a cofactor. Requires ferriheme a as cofactor. Heme A3. is required as a cofactor.

It localises to the cell membrane. It carries out the reaction 2 a quinol + O2 = 2 a quinone + 2 H2O. It functions in the pathway energy metabolism; oxidative phosphorylation. Catalyzes quinol oxidation with the concomitant reduction of oxygen to water. The polypeptide is Probable quinol oxidase subunit 1 (qoxB) (Staphylococcus aureus (strain MRSA252)).